The following is a 398-amino-acid chain: Metal tolerance protein 1 (398 aa).

The Cytoplasmic portion of the chain corresponds to 1–56 (MESSSPHHSHIVEVNVGKSDEERIIVASKVCGEAPCGFSDSKNASGDAHERSASMR). The chain crosses the membrane as a helical span at residues 57 to 77 (KLCIAVVLCLVFMSVEVVGGI). Topologically, residues 78 to 89 (KANSLAILTDAA) are vacuolar. A helical transmembrane segment spans residues 90 to 110 (HLLSDVAAFAISLFSLWAAGW). Topologically, residues 111–122 (EATPRQTYGFFR) are cytoplasmic. Residues 123–143 (IEILGALVSIQLIWLLTGILV) form a helical membrane-spanning segment. Residues 144-159 (YEAIIRIVTETSEVNG) lie on the Vacuolar side of the membrane. The chain crosses the membrane as a helical span at residues 160 to 180 (FLMFLVAAFGLVVNIIMAVLL). Over 181-263 (GHDHGHSHGH…KRNINLQGAY (83 aa)) the chain is Cytoplasmic. A required for zinc-binding region spans residues 182-232 (HDHGHSHGHGHGHGHDHHNHSHGVTVTTHHHHHDHEHGHSHGHGEDKHHAH). A disordered region spans residues 186 to 232 (HSHGHGHGHGHDHHNHSHGVTVTTHHHHHDHEHGHSHGHGEDKHHAH). Over residues 187–202 (SHGHGHGHGHDHHNHS) the composition is skewed to basic residues. The segment covering 216 to 232 (HEHGHSHGHGEDKHHAH) has biased composition (basic and acidic residues). Residues 264–284 (LHVLGDSIQSVGVMIGGAIIW) traverse the membrane as a helical segment. At 285-290 (YNPEWK) the chain is on the vacuolar side. Residues 291 to 311 (IVDLICTLAFSVIVLGTTINM) form a helical membrane-spanning segment. The Cytoplasmic segment spans residues 312–398 (IRNILEVLME…ISHVTIQIER (87 aa)).

Belongs to the cation diffusion facilitator (CDF) transporter (TC 2.A.4) family. SLC30A subfamily. Ubiquitously expressed at low levels.

The protein localises to the vacuole membrane. Functionally, mediates zinc accumulation in roots and confers resistance to zinc. Involved in sequestration of excess zinc in the cytoplasm into vacuoles to maintain zinc homeostasis. Can also transport cadmium with a low efficiency. This chain is Metal tolerance protein 1, found in Arabidopsis thaliana (Mouse-ear cress).